Here is a 569-residue protein sequence, read N- to C-terminus: Urease subunit alpha (569 aa).

A Urease domain is found at 131-569; sequence GGIDSHIHFI…LPLAQRYFLF (439 aa). 3 residues coordinate Ni(2+): H136, H138, and K219. An N6-carboxylysine modification is found at K219. H221 contacts substrate. 2 residues coordinate Ni(2+): H248 and H274. Catalysis depends on H322, which acts as the Proton donor. Position 362 (D362) interacts with Ni(2+).

The protein belongs to the metallo-dependent hydrolases superfamily. Urease alpha subunit family. Heterotrimer of UreA (gamma), UreB (beta) and UreC (alpha) subunits. Three heterotrimers associate to form the active enzyme. It depends on Ni cation as a cofactor. In terms of processing, carboxylation allows a single lysine to coordinate two nickel ions.

It localises to the cytoplasm. The enzyme catalyses urea + 2 H2O + H(+) = hydrogencarbonate + 2 NH4(+). It functions in the pathway nitrogen metabolism; urea degradation; CO(2) and NH(3) from urea (urease route): step 1/1. The protein is Urease subunit alpha of Herpetosiphon aurantiacus (strain ATCC 23779 / DSM 785 / 114-95).